The chain runs to 157 residues: 3-dehydroquinate dehydratase (157 aa).

The Proton acceptor role is filled by tyrosine 22. Positions 73, 79, and 86 each coordinate substrate. The Proton donor role is filled by histidine 99. Substrate contacts are provided by residues 100–101 (LS) and arginine 110.

The protein belongs to the type-II 3-dehydroquinase family. Homododecamer.

It carries out the reaction 3-dehydroquinate = 3-dehydroshikimate + H2O. The protein operates within metabolic intermediate biosynthesis; chorismate biosynthesis; chorismate from D-erythrose 4-phosphate and phosphoenolpyruvate: step 3/7. Functionally, catalyzes a trans-dehydration via an enolate intermediate. The chain is 3-dehydroquinate dehydratase from Roseiflexus castenholzii (strain DSM 13941 / HLO8).